Consider the following 283-residue polypeptide: Elongation factor Ts (283 aa).

Residues 80–83 (TDFV) form an involved in Mg(2+) ion dislocation from EF-Tu region.

It belongs to the EF-Ts family.

The protein resides in the cytoplasm. Associates with the EF-Tu.GDP complex and induces the exchange of GDP to GTP. It remains bound to the aminoacyl-tRNA.EF-Tu.GTP complex up to the GTP hydrolysis stage on the ribosome. The sequence is that of Elongation factor Ts from Citrobacter koseri (strain ATCC BAA-895 / CDC 4225-83 / SGSC4696).